The chain runs to 466 residues: Flagellum-specific ATP synthase (466 aa).

194-201 serves as a coordination point for ATP; the sequence is SSSGLGKS.

This sequence belongs to the ATPase alpha/beta chains family.

It localises to the cytoplasm. It carries out the reaction ATP + H2O + 4 H(+)(in) = ADP + phosphate + 5 H(+)(out). Its function is as follows. Probable catalytic subunit of a protein translocase for flagellum-specific export, or a proton translocase involved in local circuits at the flagellum. May be involved in a specialized protein export pathway that proceeds without signal peptide cleavage. The sequence is that of Flagellum-specific ATP synthase (fliI) from Buchnera aphidicola subsp. Schizaphis graminum (strain Sg).